We begin with the raw amino-acid sequence, 350 residues long: DNA-directed RNA polymerase subunit alpha (350 aa).

The interval 1-226 (MLISQRPTLS…ELFGLARELN (226 aa)) is alpha N-terminal domain (alpha-NTD). An alpha C-terminal domain (alpha-CTD) region spans residues 241–350 (ADHIASFALP…NQDYAETEQL (110 aa)). The tract at residues 326-350 (ATGTWNSDAGYDLEDNQDYAETEQL) is disordered. Over residues 336–350 (YDLEDNQDYAETEQL) the composition is skewed to acidic residues.

The protein belongs to the RNA polymerase alpha chain family. Homodimer. The RNAP catalytic core consists of 2 alpha, 1 beta, 1 beta' and 1 omega subunit. When a sigma factor is associated with the core the holoenzyme is formed, which can initiate transcription.

The enzyme catalyses RNA(n) + a ribonucleoside 5'-triphosphate = RNA(n+1) + diphosphate. In terms of biological role, DNA-dependent RNA polymerase catalyzes the transcription of DNA into RNA using the four ribonucleoside triphosphates as substrates. In Mycobacterium sp. (strain JLS), this protein is DNA-directed RNA polymerase subunit alpha.